A 126-amino-acid polypeptide reads, in one-letter code: Small ribosomal subunit protein uS13 (126 aa).

The disordered stretch occupies residues 98-126; the sequence is VRGQSTKNNARTRKGKRKTVANKKKAAKK. Basic residues predominate over residues 107-126; it reads ARTRKGKRKTVANKKKAAKK.

It belongs to the universal ribosomal protein uS13 family. Part of the 30S ribosomal subunit. Forms a loose heterodimer with protein S19. Forms two bridges to the 50S subunit in the 70S ribosome.

In terms of biological role, located at the top of the head of the 30S subunit, it contacts several helices of the 16S rRNA. In the 70S ribosome it contacts the 23S rRNA (bridge B1a) and protein L5 of the 50S subunit (bridge B1b), connecting the 2 subunits; these bridges are implicated in subunit movement. Contacts the tRNAs in the A and P-sites. The protein is Small ribosomal subunit protein uS13 of Amoebophilus asiaticus (strain 5a2).